Consider the following 361-residue polypeptide: Phospho-N-acetylmuramoyl-pentapeptide-transferase (361 aa).

10 helical membrane passes run 28–48 (LAIIITLSLSFITGPILIEFL), 74–94 (TMGGIMIILSSCLSTLLLADL), 99–119 (IWITLFGFISFGIIGFMDDYA), 133–153 (SKLLLQGIISVIICVLLEYLD), 168–188 (LSLDLGYCYIVFAIFVIVGSS), 203–223 (VPIAFTAGSFALISYLVGNLI), 236–256 (TGELTVLCAGLVGSCLGFLWF), 263–283 (VFMGDTGSLSLGGVLGIISVI), 288–308 (IVLAIVGGLFVIETASVILQV), and 338–358 (KVVIRFWIISVIFALIGLSSL).

Belongs to the glycosyltransferase 4 family. MraY subfamily. The cofactor is Mg(2+).

It is found in the cell membrane. The catalysed reaction is UDP-N-acetyl-alpha-D-muramoyl-L-alanyl-gamma-D-glutamyl-meso-2,6-diaminopimeloyl-D-alanyl-D-alanine + di-trans,octa-cis-undecaprenyl phosphate = di-trans,octa-cis-undecaprenyl diphospho-N-acetyl-alpha-D-muramoyl-L-alanyl-D-glutamyl-meso-2,6-diaminopimeloyl-D-alanyl-D-alanine + UMP. It participates in cell wall biogenesis; peptidoglycan biosynthesis. Functionally, catalyzes the initial step of the lipid cycle reactions in the biosynthesis of the cell wall peptidoglycan: transfers peptidoglycan precursor phospho-MurNAc-pentapeptide from UDP-MurNAc-pentapeptide onto the lipid carrier undecaprenyl phosphate, yielding undecaprenyl-pyrophosphoryl-MurNAc-pentapeptide, known as lipid I. The protein is Phospho-N-acetylmuramoyl-pentapeptide-transferase of Rickettsia rickettsii.